The following is an 81-amino-acid chain: ATP synthase subunit c (81 aa).

The next 2 helical transmembrane spans lie at 7–27 (AASVVAAGLAVGLGAIGPGLG) and 57–77 (FAFMESLTIYGLVVALVLLFA).

This sequence belongs to the ATPase C chain family. As to quaternary structure, F-type ATPases have 2 components, F(1) - the catalytic core - and F(0) - the membrane proton channel. F(1) has five subunits: alpha(3), beta(3), gamma(1), delta(1), epsilon(1). F(0) has four main subunits: a(1), b(1), b'(1) and c(10-14). The alpha and beta chains form an alternating ring which encloses part of the gamma chain. F(1) is attached to F(0) by a central stalk formed by the gamma and epsilon chains, while a peripheral stalk is formed by the delta, b and b' chains.

The protein resides in the cellular thylakoid membrane. F(1)F(0) ATP synthase produces ATP from ADP in the presence of a proton or sodium gradient. F-type ATPases consist of two structural domains, F(1) containing the extramembraneous catalytic core and F(0) containing the membrane proton channel, linked together by a central stalk and a peripheral stalk. During catalysis, ATP synthesis in the catalytic domain of F(1) is coupled via a rotary mechanism of the central stalk subunits to proton translocation. Functionally, key component of the F(0) channel; it plays a direct role in translocation across the membrane. A homomeric c-ring of between 10-14 subunits forms the central stalk rotor element with the F(1) delta and epsilon subunits. The protein is ATP synthase subunit c of Prochlorococcus marinus (strain MIT 9301).